The primary structure comprises 108 residues: DNA-directed RNA polymerase III subunit RPC10 (108 aa).

Residues C5, C8, C25, C28, C69, and C72 each contribute to the Zn(2+) site. Residues 5-28 form a C4-type zinc finger; that stretch reads CPGCGNGLIVEEGQRCHRFACNTC. The TFIIS-type zinc-finger motif lies at 65-107; it reads TAEPCPKCEHPRAYFMQLQTRYADEPMTTFYKCCNAQCGHRWR. The Hairpin motif lies at 88-89; the sequence is DE. Residues C98 and C102 each coordinate Zn(2+).

The protein belongs to the archaeal RpoM/eukaryotic RPA12/RPB9/RPC11 RNA polymerase family. As to quaternary structure, component of the RNA polymerase III complex consisting of 17 subunits: a ten-subunit horseshoe-shaped catalytic core composed of POLR3A/RPC1, POLR3B/RPC2, POLR1C/RPAC1, POLR1D/RPAC2, POLR3K/RPC10, POLR2E/RPABC1, POLR2F/RPABC2, POLR2H/RPABC3, POLR2K/RPABC4 and POLR2L/RPABC5; a mobile stalk composed of two subunits POLR3H/RPC8 and CRCP/RPC9, protruding from the core and functioning primarily in transcription initiation; and additional subunits homologous to general transcription factors of the RNA polymerase II machinery, POLR3C/RPC3-POLR3F/RPC6-POLR3G/RPC7 heterotrimer required for transcription initiation and POLR3D/RPC4-POLR3E/RPC5 heterodimer involved in both transcription initiation and termination.

The protein resides in the nucleus. Functionally, core component of RNA polymerase III (Pol III) which synthesizes small non-coding RNAs using the four ribonucleoside triphosphates as substrates. Can mediate Pol I proofreading of the nascent RNA transcript. Anchors into the Pol III active site to constantly monitor transcription fidelity, cleaves mis-incorporated 5'-ribonucleotides and restarts the transcription process. Once Pol III reaches the poly(dT) termination signal, can induce Pol III clamp opening and transcription termination. Pol III plays an important role in sensing and limiting infection by intracellular bacteria and DNA viruses. Acts as a nuclear and cytosolic DNA sensor involved in innate immune response. Can sense non-self dsDNA that serves as template for transcription into dsRNA. The non-self RNA polymerase III transcripts, such as Epstein-Barr virus-encoded RNAs (EBERs) induce type I interferon and NF-kappa-B through the RIG-I pathway. The chain is DNA-directed RNA polymerase III subunit RPC10 (POLR3K) from Bos taurus (Bovine).